Here is a 298-residue protein sequence, read N- to C-terminus: Homoserine kinase (298 aa).

Residue 85–95 coordinates ATP; the sequence is PMGGLGSSAAS.

It belongs to the GHMP kinase family. Homoserine kinase subfamily.

It localises to the cytoplasm. The enzyme catalyses L-homoserine + ATP = O-phospho-L-homoserine + ADP + H(+). The protein operates within amino-acid biosynthesis; L-threonine biosynthesis; L-threonine from L-aspartate: step 4/5. Functionally, catalyzes the ATP-dependent phosphorylation of L-homoserine to L-homoserine phosphate. The polypeptide is Homoserine kinase (Methanopyrus kandleri (strain AV19 / DSM 6324 / JCM 9639 / NBRC 100938)).